Here is a 214-residue protein sequence, read N- to C-terminus: Dephospho-CoA kinase (214 aa).

One can recognise a DPCK domain in the interval 3–202 (KIGLTGGIGS…DRWLALAGAA (200 aa)). 11–16 (GSGKSR) is an ATP binding site.

Belongs to the CoaE family.

The protein localises to the cytoplasm. The enzyme catalyses 3'-dephospho-CoA + ATP = ADP + CoA + H(+). It functions in the pathway cofactor biosynthesis; coenzyme A biosynthesis; CoA from (R)-pantothenate: step 5/5. Functionally, catalyzes the phosphorylation of the 3'-hydroxyl group of dephosphocoenzyme A to form coenzyme A. This Bordetella pertussis (strain Tohama I / ATCC BAA-589 / NCTC 13251) protein is Dephospho-CoA kinase.